Consider the following 72-residue polypeptide: Translation initiation factor IF-1 (72 aa).

An S1-like domain is found at M1–K72.

Belongs to the IF-1 family. As to quaternary structure, component of the 30S ribosomal translation pre-initiation complex which assembles on the 30S ribosome in the order IF-2 and IF-3, IF-1 and N-formylmethionyl-tRNA(fMet); mRNA recruitment can occur at any time during PIC assembly.

The protein localises to the cytoplasm. One of the essential components for the initiation of protein synthesis. Stabilizes the binding of IF-2 and IF-3 on the 30S subunit to which N-formylmethionyl-tRNA(fMet) subsequently binds. Helps modulate mRNA selection, yielding the 30S pre-initiation complex (PIC). Upon addition of the 50S ribosomal subunit IF-1, IF-2 and IF-3 are released leaving the mature 70S translation initiation complex. This is Translation initiation factor IF-1 from Hyphomonas neptunium (strain ATCC 15444).